Consider the following 142-residue polypeptide: Peptide methionine sulfoxide reductase MsrB (142 aa).

The region spanning 13-135 (EKDWKVELSE…NSLSMTFKGE (123 aa)) is the MsrB domain. Zn(2+)-binding residues include cysteine 52, cysteine 55, cysteine 101, and cysteine 104. The active-site Nucleophile is cysteine 124.

This sequence belongs to the MsrB Met sulfoxide reductase family. It depends on Zn(2+) as a cofactor.

It carries out the reaction L-methionyl-[protein] + [thioredoxin]-disulfide + H2O = L-methionyl-(R)-S-oxide-[protein] + [thioredoxin]-dithiol. This Alteromonas mediterranea (strain DSM 17117 / CIP 110805 / LMG 28347 / Deep ecotype) protein is Peptide methionine sulfoxide reductase MsrB.